Consider the following 361-residue polypeptide: D-alanine--D-alanine ligase (361 aa).

The 211-residue stretch at 134 to 344 folds into the ATP-grasp domain; it reads KILAQRAGVP…YTDLITKLID (211 aa). An ATP-binding site is contributed by 169-224; sequence ASQLGSDLFVKPSNQGSSVGVSHVTNEKEYKVALAEAFKYDDKVLVEETVHGTEVE. Mg(2+) is bound by residues Asp297, Glu311, and Asn313.

The protein belongs to the D-alanine--D-alanine ligase family. Mg(2+) is required as a cofactor. Requires Mn(2+) as cofactor.

The protein resides in the cytoplasm. It catalyses the reaction 2 D-alanine + ATP = D-alanyl-D-alanine + ADP + phosphate + H(+). The protein operates within cell wall biogenesis; peptidoglycan biosynthesis. In terms of biological role, cell wall formation. The polypeptide is D-alanine--D-alanine ligase (Lactobacillus johnsonii (strain CNCM I-12250 / La1 / NCC 533)).